The sequence spans 451 residues: UDP-N-acetylmuramoylalanine--D-glutamate ligase (451 aa).

119–125 (GSNGKTT) contributes to the ATP binding site.

The protein belongs to the MurCDEF family.

The protein resides in the cytoplasm. The catalysed reaction is UDP-N-acetyl-alpha-D-muramoyl-L-alanine + D-glutamate + ATP = UDP-N-acetyl-alpha-D-muramoyl-L-alanyl-D-glutamate + ADP + phosphate + H(+). It participates in cell wall biogenesis; peptidoglycan biosynthesis. Its function is as follows. Cell wall formation. Catalyzes the addition of glutamate to the nucleotide precursor UDP-N-acetylmuramoyl-L-alanine (UMA). The polypeptide is UDP-N-acetylmuramoylalanine--D-glutamate ligase (Geobacillus kaustophilus (strain HTA426)).